Reading from the N-terminus, the 184-residue chain is ATP synthase subunit b, chloroplastic (184 aa).

Residues 27–49 (LATNPINLSVVLGVLIFFGKGVL) form a helical membrane-spanning segment.

The protein belongs to the ATPase B chain family. In terms of assembly, F-type ATPases have 2 components, F(1) - the catalytic core - and F(0) - the membrane proton channel. F(1) has five subunits: alpha(3), beta(3), gamma(1), delta(1), epsilon(1). F(0) has four main subunits: a(1), b(1), b'(1) and c(10-14). The alpha and beta chains form an alternating ring which encloses part of the gamma chain. F(1) is attached to F(0) by a central stalk formed by the gamma and epsilon chains, while a peripheral stalk is formed by the delta, b and b' chains.

Its subcellular location is the plastid. It localises to the chloroplast thylakoid membrane. Its function is as follows. F(1)F(0) ATP synthase produces ATP from ADP in the presence of a proton or sodium gradient. F-type ATPases consist of two structural domains, F(1) containing the extramembraneous catalytic core and F(0) containing the membrane proton channel, linked together by a central stalk and a peripheral stalk. During catalysis, ATP synthesis in the catalytic domain of F(1) is coupled via a rotary mechanism of the central stalk subunits to proton translocation. Functionally, component of the F(0) channel, it forms part of the peripheral stalk, linking F(1) to F(0). This chain is ATP synthase subunit b, chloroplastic, found in Cuscuta exaltata (Tall dodder).